The following is a 660-amino-acid chain: Probable rhamnogalacturonate lyase B (660 aa).

The first 20 residues, 1 to 20 (MRLSVSLGLASLWTAIGATA), serve as a signal peptide directing secretion. N-linked (GlcNAc...) asparagine glycosylation is found at asparagine 22, asparagine 27, asparagine 109, asparagine 142, asparagine 238, asparagine 284, asparagine 432, asparagine 492, asparagine 532, asparagine 594, and asparagine 635.

The protein belongs to the polysaccharide lyase 4 family.

The protein localises to the secreted. It catalyses the reaction Endotype eliminative cleavage of L-alpha-rhamnopyranosyl-(1-&gt;4)-alpha-D-galactopyranosyluronic acid bonds of rhamnogalacturonan I domains in ramified hairy regions of pectin leaving L-rhamnopyranose at the reducing end and 4-deoxy-4,5-unsaturated D-galactopyranosyluronic acid at the non-reducing end.. Pectinolytic enzymes consist of four classes of enzymes: pectin lyase, polygalacturonase, pectin methylesterase and rhamnogalacturonase. Degrades the rhamnogalacturonan I (RG-I) backbone of pectin. The sequence is that of Probable rhamnogalacturonate lyase B (rglB) from Aspergillus terreus (strain NIH 2624 / FGSC A1156).